A 235-amino-acid chain; its full sequence is 2-C-methyl-D-erythritol 4-phosphate cytidylyltransferase (235 aa).

It belongs to the IspD/TarI cytidylyltransferase family. IspD subfamily.

The enzyme catalyses 2-C-methyl-D-erythritol 4-phosphate + CTP + H(+) = 4-CDP-2-C-methyl-D-erythritol + diphosphate. The protein operates within isoprenoid biosynthesis; isopentenyl diphosphate biosynthesis via DXP pathway; isopentenyl diphosphate from 1-deoxy-D-xylulose 5-phosphate: step 2/6. Catalyzes the formation of 4-diphosphocytidyl-2-C-methyl-D-erythritol from CTP and 2-C-methyl-D-erythritol 4-phosphate (MEP). The sequence is that of 2-C-methyl-D-erythritol 4-phosphate cytidylyltransferase from Pseudomonas putida (strain W619).